A 338-amino-acid polypeptide reads, in one-letter code: Lumican (338 aa).

A signal peptide spans 1 to 18 (MSLSAFTLFLALIGGTSG). Q19 bears the Pyrrolidone carboxylic acid mark. Residues Y20, Y21, Y23, and Y30 each carry the sulfotyrosine modification. In terms of domain architecture, LRRNT spans 28–66 (SIYGQSSPNCAPECNCPESYPSAMYCDELKLKSVPMVPP). 10 LRR repeats span residues 67–88 (GIKY…AFEN), 91–114 (DLQW…VFSK), 117–137 (QLKK…PLPK), 138–159 (SLED…EGLV), 160–181 (NLTF…AAFK), 185–205 (SLEY…GLPV), 206–227 (SLLT…YFKR), 230–253 (ALQY…SFNV), 255–276 (SLVE…NENL), and 277–296 (ENYY…SFCK). Residue N88 is glycosylated (N-linked (GlcNAc...) (keratan sulfate) asparagine). N127 carries N-linked (GlcNAc...) (keratan sulfate) asparagine glycosylation. N-linked (GlcNAc...) (keratan sulfate) asparagine glycosylation occurs at N160. N-linked (GlcNAc...) (keratan sulfate) asparagine glycosylation is present at N252. Residues C295 and C328 are joined by a disulfide bond. S304 carries the post-translational modification Phosphoserine. An LRR 11 repeat occupies 305-326 (KIKHLRLDGNRISETSLPPDMY).

The protein belongs to the small leucine-rich proteoglycan (SLRP) family. SLRP class II subfamily. Binds to laminin. In terms of processing, sulfated on tyrosine residue(s). Contains keratan sulfate. Cornea and other tissues.

Its subcellular location is the secreted. It localises to the extracellular space. The protein localises to the extracellular matrix. The protein is Lumican (LUM) of Homo sapiens (Human).